Consider the following 241-residue polypeptide: Putative integrase ORF241 (241 aa).

The Tyr recombinase domain maps to 82-241 (VEAKKTLVSA…AIEMLRKLAD (160 aa)). Residues R119, K144, H191, R194, and H217 contribute to the active site. The active-site O-(3'-phospho-DNA)-tyrosine intermediate is the Y226.

Belongs to the 'phage' integrase family.

In terms of biological role, this protein may encode an integrase, which is necessary for integration of the viral DNA into host genome. This is Putative integrase ORF241 from Acidianus convivator (ATV).